We begin with the raw amino-acid sequence, 55 residues long: ATP synthase F(0) complex subunit 8 (55 aa).

The helical transmembrane segment at 8–24 threads the bilayer; it reads PWFMIMLMTWFTYSLLI.

Belongs to the ATPase protein 8 family. In terms of assembly, component of the ATP synthase complex composed at least of ATP5F1A/subunit alpha, ATP5F1B/subunit beta, ATP5MC1/subunit c (homooctomer), MT-ATP6/subunit a, MT-ATP8/subunit 8, ATP5ME/subunit e, ATP5MF/subunit f, ATP5MG/subunit g, ATP5MK/subunit k, ATP5MJ/subunit j, ATP5F1C/subunit gamma, ATP5F1D/subunit delta, ATP5F1E/subunit epsilon, ATP5PF/subunit F6, ATP5PB/subunit b, ATP5PD/subunit d, ATP5PO/subunit OSCP. ATP synthase complex consists of a soluble F(1) head domain (subunits alpha(3) and beta(3)) - the catalytic core - and a membrane F(0) domain - the membrane proton channel (subunits c, a, 8, e, f, g, k and j). These two domains are linked by a central stalk (subunits gamma, delta, and epsilon) rotating inside the F1 region and a stationary peripheral stalk (subunits F6, b, d, and OSCP).

Its subcellular location is the mitochondrion membrane. In terms of biological role, subunit 8, of the mitochondrial membrane ATP synthase complex (F(1)F(0) ATP synthase or Complex V) that produces ATP from ADP in the presence of a proton gradient across the membrane which is generated by electron transport complexes of the respiratory chain. ATP synthase complex consist of a soluble F(1) head domain - the catalytic core - and a membrane F(1) domain - the membrane proton channel. These two domains are linked by a central stalk rotating inside the F(1) region and a stationary peripheral stalk. During catalysis, ATP synthesis in the catalytic domain of F(1) is coupled via a rotary mechanism of the central stalk subunits to proton translocation. In vivo, can only synthesize ATP although its ATP hydrolase activity can be activated artificially in vitro. Part of the complex F(0) domain. In Coturnix japonica (Japanese quail), this protein is ATP synthase F(0) complex subunit 8.